The chain runs to 121 residues: Large ribosomal subunit protein uL24 (121 aa).

The disordered stretch occupies residues methionine 1–alanine 30.

This sequence belongs to the universal ribosomal protein uL24 family. As to quaternary structure, part of the 50S ribosomal subunit.

In terms of biological role, one of two assembly initiator proteins, it binds directly to the 5'-end of the 23S rRNA, where it nucleates assembly of the 50S subunit. Functionally, located at the polypeptide exit tunnel on the outside of the subunit. This chain is Large ribosomal subunit protein uL24, found in Methanoculleus marisnigri (strain ATCC 35101 / DSM 1498 / JR1).